A 374-amino-acid chain; its full sequence is Ras-related GTP-binding protein B (374 aa).

Methionine 1 bears the N-acetylmethionine mark. Residues 1 to 15 (MEESDSEKKTEKENV) show a composition bias toward basic and acidic residues. The disordered stretch occupies residues 1–30 (MEESDSEKKTEKENVGPKVEPPLGEPEGSL). GTP contacts are provided by serine 49 and glycine 50. Glycine 50, serine 51, glycine 52, lysine 53, threonine 54, serine 55, threonine 69, and threonine 75 together coordinate GDP. GTP-binding residues include glycine 52, lysine 53, threonine 54, serine 55, threonine 69, threonine 75, glycine 126, and histidine 188. Residues histidine 188 and aspartate 191 each coordinate GDP. Lysine 203 participates in a covalent cross-link: Glycyl lysine isopeptide (Lys-Gly) (interchain with G-Cter in ubiquitin). Residues leucine 209 and isoleucine 225 each contribute to the GDP site. Isoleucine 225 serves as a coordination point for GTP. Glycyl lysine isopeptide (Lys-Gly) (interchain with G-Cter in ubiquitin) cross-links involve residues lysine 281, lysine 291, and lysine 305.

This sequence belongs to the GTR/RAG GTP-binding protein family. As to quaternary structure, interacts with RRAGC and RRAGD; heterodimerization stabilizes RRAG proteins. The GTP-bound form of RRAGB (in complex with the GDP-bound form of RRAGC or RRAGD) interacts with RPTOR, thereby promoting recruitment of mTORC1 to the lysosomes. Component of the lysosomal folliculin complex (LFC), composed of FLCN, FNIP1 (or FNIP2), RagA/RRAGA or RagB/RRAGB GDP-bound, RagC/RRAGC or RagD/RRAGD GTP-bound, and Ragulator. Interacts with SH3BP4; the interaction with this negative regulator is most probably direct, preferentially occurs with the inactive GDP-bound form of RRAGB, is negatively regulated by amino acids and prevents interaction with RPTOR. Interacts with the GATOR1 complex; inactivates RRAGB. The Rag heterodimer interacts with SLC38A9; the probable amino acid sensor. Interacts with SESN1, SESN2 and SESN3.

Its subcellular location is the cytoplasm. It is found in the lysosome membrane. It carries out the reaction GTP + H2O = GDP + phosphate + H(+). With respect to regulation, the activation of GTP-binding proteins is generally mediated by a guanine exchange factor (GEF), while inactivation through hydrolysis of bound GTP is catalyzed by a GTPase activating protein (GAP). The Ragulator complex functions as a GEF and promotes the active GTP-bound form. The GATOR1 complex functions as a GAP and stimulates RRAGB GTPase activity to turn it into its inactive GDP-bound form, preventing mTORC1 recruitment and activation. Functionally, guanine nucleotide-binding protein that plays a crucial role in the cellular response to amino acid availability through regulation of the mTORC1 signaling cascade. Forms heterodimeric Rag complexes with RagC/RRAGC or RagD/RRAGD and cycles between an inactive GDP-bound and an active GTP-bound form: RagB/RRAGB is in its active form when GTP-bound RagB/RRAGB forms a complex with GDP-bound RagC/RRAGC (or RagD/RRAGD) and in an inactive form when GDP-bound RagB/RRAGB heterodimerizes with GTP-bound RagC/RRAGC (or RagD/RRAGD). In its GTP-bound active form, promotes the recruitment of mTORC1 to the lysosomes and its subsequent activation by the GTPase RHEB. Involved in the RCC1/Ran-GTPase pathway. This Mus musculus (Mouse) protein is Ras-related GTP-binding protein B.